The primary structure comprises 100 residues: Small ribosomal subunit protein uS14 (100 aa).

This sequence belongs to the universal ribosomal protein uS14 family. Part of the 30S ribosomal subunit. Contacts proteins S3 and S10.

Functionally, binds 16S rRNA, required for the assembly of 30S particles and may also be responsible for determining the conformation of the 16S rRNA at the A site. The chain is Small ribosomal subunit protein uS14 from Thermosynechococcus vestitus (strain NIES-2133 / IAM M-273 / BP-1).